Consider the following 1386-residue polypeptide: DNA-directed RNA polymerase subunit beta'' (1386 aa).

Zn(2+) is bound by residues C220, C289, C296, and C299.

Belongs to the RNA polymerase beta' chain family. RpoC2 subfamily. As to quaternary structure, in plastids the minimal PEP RNA polymerase catalytic core is composed of four subunits: alpha, beta, beta', and beta''. When a (nuclear-encoded) sigma factor is associated with the core the holoenzyme is formed, which can initiate transcription. Requires Zn(2+) as cofactor.

Its subcellular location is the plastid. It is found in the chloroplast. It catalyses the reaction RNA(n) + a ribonucleoside 5'-triphosphate = RNA(n+1) + diphosphate. Functionally, DNA-dependent RNA polymerase catalyzes the transcription of DNA into RNA using the four ribonucleoside triphosphates as substrates. The sequence is that of DNA-directed RNA polymerase subunit beta'' from Marchantia polymorpha (Common liverwort).